Here is a 379-residue protein sequence, read N- to C-terminus: MSTEGQIIKCKAAVAWEAGKDLSIEEIEVLPPRAHEVRVKVEFTGVCHTDAYTLSGADAEGSFPVVFGHEGAGVVESVGEGVESVKVGDSVVLLYTPECRECKFCLSGKTNLCGKIRATQGKGLLPDGTSRFRCKGKDLFHYMGCSSFSQYTVVADISVVKVQDEAPKDKTCLLGCGVTTGYGAAINTAKISKGDKIGVFGAGCIGLSVIQGAVSKGASEIIVIDINDSKKAWADQFGATKFVNPTTLPEGTNIVDYLIDITDGGFDYTFDCTGNVQVMRNALESCHKGWGESIIIGVAAAGKEISTRPFQLVTGRVWRGCAFGGIKGRTQMPSLVQDYLDGKIKVDEFITHRHDLDNINKAFHDMHAGNCIRAVITMH.

Cys47 provides a ligand contact to Zn(2+). Residue His48 participates in NAD(+) binding. Positions 69, 70, 99, 102, 105, 113, and 176 each coordinate Zn(2+). NAD(+)-binding positions include 201–206, Asp225, and 296–298; these read GAGCIG and IGV.

This sequence belongs to the zinc-containing alcohol dehydrogenase family. Class-III subfamily. Zn(2+) is required as a cofactor.

It carries out the reaction a primary alcohol + NAD(+) = an aldehyde + NADH + H(+). The enzyme catalyses a secondary alcohol + NAD(+) = a ketone + NADH + H(+). The catalysed reaction is S-(hydroxymethyl)glutathione + NADP(+) = S-formylglutathione + NADPH + H(+). It catalyses the reaction S-(hydroxymethyl)glutathione + NAD(+) = S-formylglutathione + NADH + H(+). It carries out the reaction S-nitrosoglutathione + NADH + H(+) = S-(hydroxysulfenamide)glutathione + NAD(+). Oxidizes long-chain alcohols and, in the presence of glutathione, is able to oxidize formaldehyde. Also acts as a S-nitroso-glutathione reductase by catalyzing the NADH-dependent reduction of S-nitrosoglutathione, thereby regulating protein S-nitrosylation. In Komagataella pastoris (Yeast), this protein is S-(hydroxymethyl)glutathione dehydrogenase (FLD1).